Reading from the N-terminus, the 314-residue chain is uncharacterized protein (314 aa).

The segment covering 68 to 91 (EKKKKSSSFEKRDKRRVQLKEKSP) has biased composition (basic and acidic residues). Disordered stretches follow at residues 68–97 (EKKK…TPRN) and 141–164 (MDVQ…RPAS). Residues 144 to 157 (QSPSTMSTSKNNVR) show a composition bias toward polar residues.

It localises to the mitochondrion. This is an uncharacterized protein from Schizosaccharomyces pombe (strain 972 / ATCC 24843) (Fission yeast).